We begin with the raw amino-acid sequence, 461 residues long: Zinc transporter 6 (461 aa).

At 1–33 the chain is on the cytoplasmic side; it reads MGTIHLFRKPQRSFFGKLLQEFRLVAADRRSWK. The helical transmembrane segment at 34-54 threads the bilayer; that stretch reads ILLFGAINLTCTGFLLMWCSS. Topologically, residues 55-64 are extracellular; that stretch reads TNSIALTAYT. Residues 65–85 traverse the membrane as a helical segment; that stretch reads YLTIFDLFSLITCLVSYWVMM. Topologically, residues 86-98 are cytoplasmic; it reads RKPSPAYSFGFER. A helical transmembrane segment spans residues 99 to 119; sequence LEVLAVFASTVLAQLGALFIL. Over 120–134 the chain is Extracellular; it reads KESAERFLEQPEIHT. Residues 135 to 155 form a helical membrane-spanning segment; it reads GRLLVGTFVALSFNLFTMLSI. At 156–200 the chain is on the cytoplasmic side; sequence RNKPFAYVSEAASTSWLQEHVADLSRSLCGIIPGLSSIFLPRMNP. A helical membrane pass occupies residues 201-221; it reads FVLIDLAGAFALCITYMLIEI. Residues 222 to 223 are Extracellular-facing; it reads NN. A helical transmembrane segment spans residues 224–244; the sequence is YFAVDTASAIAIALMTFGTMY. Residues 245-461 are Cytoplasmic-facing; that stretch reads PMSVYSGKVL…TNNRIGQPRP (217 aa). The disordered stretch occupies residues 362–393; the sequence is PPLKGTDDSNPVTSTPTKPSSPPPEFSFNTPG. Low complexity predominate over residues 370–379; sequence SNPVTSTPTK.

Belongs to the cation diffusion facilitator (CDF) transporter (TC 2.A.4) family. SLC30A subfamily. As to quaternary structure, heterodimer with SLC30A5; form a functional zinc ion transmembrane transporter.

It localises to the golgi apparatus. It is found in the trans-Golgi network membrane. In terms of biological role, has probably no intrinsic transporter activity but together with SLC30A5 forms a functional zinc ion:proton antiporter heterodimer, mediating zinc entry into the lumen of organelles along the secretory pathway. As part of that zinc ion:proton antiporter, contributes to zinc ion homeostasis within the early secretory pathway and regulates the activation and folding of enzymes like alkaline phosphatases and enzymes involved in phosphatidylinositol glycan anchor biosynthesis. The sequence is that of Zinc transporter 6 (SLC30A6) from Bos taurus (Bovine).